The following is a 170-amino-acid chain: Small ribosomal subunit protein eS7 (170 aa).

This sequence belongs to the eukaryotic ribosomal protein eS7 family. As to quaternary structure, component of the small ribosomal subunit.

The protein localises to the cytoplasm. The protein is Small ribosomal subunit protein eS7 (RPS7) of Encephalitozoon cuniculi (strain GB-M1) (Microsporidian parasite).